We begin with the raw amino-acid sequence, 270 residues long: Tetraspanin-17 (270 aa).

Residues 1-19 (MPGKHQHFQEPEVGCCGKY) are Cytoplasmic-facing. Residues 20–40 (FLFGFNIVFWVLGALFLAIGL) form a helical membrane-spanning segment. Over 41-63 (WAWGEKGVLSNISALTDLGGLDP) the chain is Extracellular. The N-linked (GlcNAc...) asparagine glycan is linked to Asn-51. The helical transmembrane segment at 64 to 84 (VWLFVVVGGVMSVLGFAGCIG) threads the bilayer. Over 85–94 (ALRENTFLLK) the chain is Cytoplasmic. A helical transmembrane segment spans residues 95-115 (FFSVFLGLIFFLELATGILAF). The Extracellular segment spans residues 116-234 (VFKDWIRDQL…GQFEKWLQDN (119 aa)). 4 disulfide bridges follow: Cys-155–Cys-223, Cys-156–Cys-188, Cys-172–Cys-182, and Cys-189–Cys-202. Residue Asn-171 is glycosylated (N-linked (GlcNAc...) asparagine). A helical transmembrane segment spans residues 235–255 (LIVVAGVFMGIALLQIFGICL). At 256–270 (AQNLVSDIKAVKANW) the chain is on the cytoplasmic side.

Belongs to the tetraspanin (TM4SF) family. Interacts with ADAM10; the interaction influences ADAM10 substrate specificity, endocytosis and turnover.

It is found in the cell membrane. Functionally, part of TspanC8 subgroup, composed of 6 members that interact with the transmembrane metalloprotease ADAM10. This interaction is required for ADAM10 exit from the endoplasmic reticulum and for enzymatic maturation and trafficking to the cell surface as well as substrate specificity. Different TspanC8/ADAM10 complexes have distinct substrates. Seems to regulate VE-cadherin expression in endothelial cells probably through interaction with ADAM10, promoting leukocyte transmigration. The chain is Tetraspanin-17 from Homo sapiens (Human).